The chain runs to 187 residues: Elongation factor P (187 aa).

This sequence belongs to the elongation factor P family.

The protein resides in the cytoplasm. Its pathway is protein biosynthesis; polypeptide chain elongation. Its function is as follows. Involved in peptide bond synthesis. Stimulates efficient translation and peptide-bond synthesis on native or reconstituted 70S ribosomes in vitro. Probably functions indirectly by altering the affinity of the ribosome for aminoacyl-tRNA, thus increasing their reactivity as acceptors for peptidyl transferase. This chain is Elongation factor P, found in Rhodococcus opacus (strain B4).